The chain runs to 206 residues: Glutathione S-transferase class-mu 28 kDa isozyme (206 aa).

Residues 1–81 (VKLIYFNGRG…FIARKHNMMG (81 aa)) form the GST N-terminal domain. Glutathione is bound by residues Y5, 5–6 (YF), R11, 36–40 (WPKIK), L48, 50–51 (IV), and 65–66 (ES). In terms of domain architecture, GST C-terminal spans 83–206 (TDDEYYIIEK…YLSERHATAF (124 aa)).

It belongs to the GST superfamily. Mu family. In terms of assembly, homodimer.

The enzyme catalyses RX + glutathione = an S-substituted glutathione + a halide anion + H(+). In terms of biological role, conjugation of reduced glutathione to a wide number of exogenous and endogenous hydrophobic electrophiles. Functionally, GST isoenzymes appear to play a central role in the parasite detoxification system. Other functions are also suspected including a role in increasing the solubility of haematin in the parasite gut. The sequence is that of Glutathione S-transferase class-mu 28 kDa isozyme from Schistosoma japonicum (Blood fluke).